The chain runs to 238 residues: Large ribosomal subunit protein uL2 (238 aa).

Disordered stretches follow at residues 1-34 and 197-238; these read MGKR…PPLS and VDHP…RRKR. Positions 224-238 are enriched in basic residues; it reads KVGHIAARRTGRRKR.

Belongs to the universal ribosomal protein uL2 family. In terms of assembly, part of the 50S ribosomal subunit. Forms a bridge to the 30S subunit in the 70S ribosome.

Its function is as follows. One of the primary rRNA binding proteins. Required for association of the 30S and 50S subunits to form the 70S ribosome, for tRNA binding and peptide bond formation. It has been suggested to have peptidyltransferase activity; this is somewhat controversial. Makes several contacts with the 16S rRNA in the 70S ribosome. The polypeptide is Large ribosomal subunit protein uL2 (Aeropyrum pernix (strain ATCC 700893 / DSM 11879 / JCM 9820 / NBRC 100138 / K1)).